Reading from the N-terminus, the 266-residue chain is BTB/POZ domain-containing protein KCTD2 (266 aa).

Position 2 is an N-acetylalanine (Ala2). Residues 38–79 (GRHPADTAASPPPPRTAGARARTSGADGRRRGRPLGPAQRGR) form a disordered region. Over residues 53–63 (TAGARARTSGA) the composition is skewed to low complexity. Residues 76–174 (QRGRYLLRDT…LVKERIRDNE (99 aa)) form the BTB domain.

The protein is BTB/POZ domain-containing protein KCTD2 (Kctd2) of Mus musculus (Mouse).